The following is a 559-amino-acid chain: Transmembrane E3 ubiquitin-protein ligase FLY2 (559 aa).

Positions 1-29 (MNNLGNFGVWGFGFFSLSIWFAVLQQANG) are cleaved as a signal peptide. The Lumenal segment spans residues 30 to 259 (LRPIRETARS…TSINVEVYYN (230 aa)). The chain crosses the membrane as a helical span at residues 260–280 (KAVNYTLMVTFVSFLQVLLLI). Over 281–294 (RQMEHSNTQSGAAK) the chain is Cytoplasmic. The helical transmembrane segment at 295 to 315 (VSIVMIGQQAIMDSYLCLLHL) threads the bilayer. Residues 316 to 318 (TAG) are Lumenal-facing. The helical transmembrane segment at 319-339 (ILVESLFNAFATAAFFKFVVF) threads the bilayer. Residues 340–370 (SIFEMRYLLSIWKATRPSTSGEGWETMRREL) are Cytoplasmic-facing. A helical membrane pass occupies residues 371–391 (SFLYSRFYGILLGGILLMYEF). Topologically, residues 392 to 394 (HNY) are lumenal. Residues 395–415 (MRPILLLMYSFWIPQIVANVV) traverse the membrane as a helical segment. Over 416–423 (RDSRKPLH) the chain is Cytoplasmic. A helical membrane pass occupies residues 424–444 (PYYILGMTVTRLAIPLYVFGC). Residues 445–458 (PKNFMRVEPSKAWC) are Lumenal-facing. A helical membrane pass occupies residues 459 to 479 (VSLCAFMGFQAGVLLLQHYFG). At 480 to 559 (SRCFVPRKLL…PTCRRPLPPA (80 aa)) the chain is on the cytoplasmic side. An RING-type; atypical zinc finger spans residues 509 to 553 (CVICMTTIDLRHRINDCMVTPCEHIFHSGCLQRWMDIKMECPTCR).

In terms of tissue distribution, highly expressed in stems. Expressed in root xylem and seed coat.

It localises to the endomembrane system. The enzyme catalyses S-ubiquitinyl-[E2 ubiquitin-conjugating enzyme]-L-cysteine + [acceptor protein]-L-lysine = [E2 ubiquitin-conjugating enzyme]-L-cysteine + N(6)-ubiquitinyl-[acceptor protein]-L-lysine.. Its pathway is protein modification; protein ubiquitination. Functionally, E3 ubiquitin-protein ligase that may be involved in xylem development. The chain is Transmembrane E3 ubiquitin-protein ligase FLY2 from Arabidopsis thaliana (Mouse-ear cress).